Reading from the N-terminus, the 394-residue chain is Glycerol-1-phosphate dehydrogenase [NAD(P)+] (394 aa).

NAD(+) is bound by residues D54, 116–120, and 138–141; these read GTIHD and TAPS. A substrate-binding site is contributed by D143. S147 is an NAD(+) binding site. D190 provides a ligand contact to substrate. D190 and H270 together coordinate Ni(2+). H274 contributes to the substrate binding site. H290 lines the Ni(2+) pocket.

This sequence belongs to the glycerol-1-phosphate dehydrogenase family. Homodimer. Ni(2+) is required as a cofactor.

Its subcellular location is the cytoplasm. The enzyme catalyses sn-glycerol 1-phosphate + NAD(+) = dihydroxyacetone phosphate + NADH + H(+). It carries out the reaction sn-glycerol 1-phosphate + NADP(+) = dihydroxyacetone phosphate + NADPH + H(+). Catalyzes the NAD(P)H-dependent reduction of dihydroxyacetonephosphate (DHAP or glycerone phosphate) to glycerol 1-phosphate (G1P). The G1P thus generated is probably used for the synthesis of phosphoglycerolipids in Gram-positive bacterial species. Prefers NADH over NADPH as coenzyme. Is also able to catalyze the reverse reaction, i.e. the NAD(+)-dependent oxidation of G1P but not of G3P. Does not possess glycerol dehydrogenase activity. The protein is Glycerol-1-phosphate dehydrogenase [NAD(P)+] (egsA) of Bacillus subtilis (strain 168).